The sequence spans 730 residues: Replication restart protein PriA (730 aa).

Positions 212–378 (LLFHSGFNVW…QNGKYQHLVL (167 aa)) constitute a Helicase ATP-binding domain. 225 to 232 (GVTGSGKT) contacts ATP. Positions 321-324 (DEEH) match the DEAH box motif. 8 residues coordinate Zn(2+): Cys-437, Cys-440, Cys-446, Cys-449, Cys-464, Cys-467, Cys-477, and Cys-480. The 169-residue stretch at 472–640 (TIPRQCGDCG…LPPFTFQALI (169 aa)) folds into the Helicase C-terminal domain.

It belongs to the helicase family. PriA subfamily. As to quaternary structure, component of the replication restart primosome. Requires Zn(2+) as cofactor.

It catalyses the reaction Couples ATP hydrolysis with the unwinding of duplex DNA by translocating in the 3'-5' direction.. The catalysed reaction is ATP + H2O = ADP + phosphate + H(+). Functionally, initiates the restart of stalled replication forks, which reloads the replicative helicase on sites other than the origin of replication. Recognizes and binds to abandoned replication forks and remodels them to uncover a helicase loading site. Promotes assembly of the primosome at these replication forks. The polypeptide is Replication restart protein PriA (Haemophilus influenzae (strain ATCC 51907 / DSM 11121 / KW20 / Rd)).